The sequence spans 293 residues: Formamidopyrimidine-DNA glycosylase (293 aa).

The Schiff-base intermediate with DNA role is filled by proline 2. The active-site Proton donor is the glutamate 3. The active-site Proton donor; for beta-elimination activity is lysine 58. DNA is bound by residues histidine 104, arginine 123, and lysine 166. Residues 257–293 (QVYDREGEPCRTDGCEGVVKRFVQNGRSTFWCPKCQR) form an FPG-type zinc finger. Catalysis depends on arginine 283, which acts as the Proton donor; for delta-elimination activity.

The protein belongs to the FPG family. As to quaternary structure, monomer. The cofactor is Zn(2+).

It carries out the reaction Hydrolysis of DNA containing ring-opened 7-methylguanine residues, releasing 2,6-diamino-4-hydroxy-5-(N-methyl)formamidopyrimidine.. The enzyme catalyses 2'-deoxyribonucleotide-(2'-deoxyribose 5'-phosphate)-2'-deoxyribonucleotide-DNA = a 3'-end 2'-deoxyribonucleotide-(2,3-dehydro-2,3-deoxyribose 5'-phosphate)-DNA + a 5'-end 5'-phospho-2'-deoxyribonucleoside-DNA + H(+). In terms of biological role, involved in base excision repair of DNA damaged by oxidation or by mutagenic agents. Acts as a DNA glycosylase that recognizes and removes damaged bases. Has a preference for oxidized purines, such as 7,8-dihydro-8-oxoguanine (8-oxoG). Has AP (apurinic/apyrimidinic) lyase activity and introduces nicks in the DNA strand. Cleaves the DNA backbone by beta-delta elimination to generate a single-strand break at the site of the removed base with both 3'- and 5'-phosphates. The chain is Formamidopyrimidine-DNA glycosylase from Bradyrhizobium sp. (strain ORS 278).